Reading from the N-terminus, the 205-residue chain is N-(5'-phosphoribosyl)anthranilate isomerase (205 aa).

The protein belongs to the TrpF family.

The catalysed reaction is N-(5-phospho-beta-D-ribosyl)anthranilate = 1-(2-carboxyphenylamino)-1-deoxy-D-ribulose 5-phosphate. Its pathway is amino-acid biosynthesis; L-tryptophan biosynthesis; L-tryptophan from chorismate: step 3/5. The sequence is that of N-(5'-phosphoribosyl)anthranilate isomerase from Acidiphilium cryptum (strain JF-5).